Consider the following 398-residue polypeptide: G2/mitotic-specific cyclin-B2 (398 aa).

A Phosphothreonine modification is found at threonine 8. Residues serine 11, serine 77, and serine 92 each carry the phosphoserine modification. Threonine 94 carries the post-translational modification Phosphothreonine. Serine 99, serine 392, and serine 398 each carry phosphoserine.

This sequence belongs to the cyclin family. Cyclin AB subfamily. As to quaternary structure, interacts with the CDK1 protein kinase to form a serine/threonine kinase holoenzyme complex also known as maturation promoting factor (MPF). The cyclin subunit imparts substrate specificity to the complex.

Its function is as follows. Essential for the control of the cell cycle at the G2/M (mitosis) transition. This is G2/mitotic-specific cyclin-B2 (CCNB2) from Homo sapiens (Human).